Reading from the N-terminus, the 447-residue chain is Chordin-like protein 1 (447 aa).

Positions 1-22 (MEGIKYIASLVFFFVFLEASKT) are cleaved as a signal peptide. VWFC domains lie at 30–95 (TYCM…PRCP) and 108–174 (KSCE…RVCR). Asn-113 carries N-linked (GlcNAc...) asparagine glycosylation. Positions 174-176 (RGD) match the Cell attachment site motif. The interval 199 to 219 (HSYLRSPYDPPPSRQAGGLPR) is disordered. The VWFC 3 domain occupies 253–318 (QVCVSNGKTY…LDGKCCKVCP (66 aa)). Asn-286 carries an N-linked (GlcNAc...) asparagine glycan.

It localises to the secreted. Functionally, seems to antagonize the function of BMP4 by binding to it and preventing its interaction with receptors. Alters the fate commitment of neural stem cells from gliogenesis to neurogenesis. Contributes to neuronal differentiation of neural stem cells in the brain by preventing the adoption of a glial fate. May play a crucial role in dorsoventral axis formation. May play a role in embryonic bone formation. Plays a role during anterior segment eye development. The protein is Chordin-like protein 1 (Chrdl1) of Rattus norvegicus (Rat).